The sequence spans 173 residues: Lipoprotein signal peptidase (173 aa).

4 helical membrane passes run 24–44 (PWLG…IAIL), 55–75 (ITGF…SFLA), 80–100 (WQRW…VWLL), and 105–125 (GQKL…GNVI). Residues Asp-135 and Asp-153 contribute to the active site. A helical transmembrane segment spans residues 145-165 (HWPAFNVADCGICIGAVLLII).

The protein belongs to the peptidase A8 family.

The protein resides in the cell inner membrane. The catalysed reaction is Release of signal peptides from bacterial membrane prolipoproteins. Hydrolyzes -Xaa-Yaa-Zaa-|-(S,diacylglyceryl)Cys-, in which Xaa is hydrophobic (preferably Leu), and Yaa (Ala or Ser) and Zaa (Gly or Ala) have small, neutral side chains.. It functions in the pathway protein modification; lipoprotein biosynthesis (signal peptide cleavage). This protein specifically catalyzes the removal of signal peptides from prolipoproteins. This Ralstonia nicotianae (strain ATCC BAA-1114 / GMI1000) (Ralstonia solanacearum) protein is Lipoprotein signal peptidase.